Consider the following 668-residue polypeptide: Acetoin catabolism regulatory protein (668 aa).

A Sigma-54 factor interaction domain is found at 341–570 (LTGGDAALQL…NVLEYARAVC (230 aa)). ATP contacts are provided by residues 369-376 (GETGSGKE) and 433-442 (ADGGTLFLDE). The segment covering 586–606 (GPAPSAALPQPGPAQSPAAAP) has biased composition (low complexity). The disordered stretch occupies residues 586 to 611 (GPAPSAALPQPGPAQSPAAAPFDPHQ). The segment at residues 630 to 649 (LSAVARQIGVSRMTLYRRME) is a DNA-binding region (H-T-H motif).

Required for sigma-54-dependent transcription of acoXABC. The protein is Acetoin catabolism regulatory protein (acoR) of Cupriavidus necator (strain ATCC 17699 / DSM 428 / KCTC 22496 / NCIMB 10442 / H16 / Stanier 337) (Ralstonia eutropha).